The chain runs to 98 residues: NADH-ubiquinone oxidoreductase chain 4L (98 aa).

The next 3 membrane-spanning stretches (helical) occupy residues 1–21 (MIPT…GMLT), 27–47 (VASL…ATLI), and 61–81 (IILL…LISI).

Belongs to the complex I subunit 4L family. Core subunit of respiratory chain NADH dehydrogenase (Complex I) which is composed of 45 different subunits.

The protein localises to the mitochondrion inner membrane. The enzyme catalyses a ubiquinone + NADH + 5 H(+)(in) = a ubiquinol + NAD(+) + 4 H(+)(out). Its function is as follows. Core subunit of the mitochondrial membrane respiratory chain NADH dehydrogenase (Complex I) which catalyzes electron transfer from NADH through the respiratory chain, using ubiquinone as an electron acceptor. Part of the enzyme membrane arm which is embedded in the lipid bilayer and involved in proton translocation. In Macaca hecki (Heck's macaque), this protein is NADH-ubiquinone oxidoreductase chain 4L (MT-ND4L).